The primary structure comprises 601 residues: Elongation factor 4 (601 aa).

Residues 5 to 187 (SNIRNFSIIA…AIVERLPAPE (183 aa)) enclose the tr-type G domain. Residues 17–22 (DHGKST) and 134–137 (NKID) each bind GTP.

Belongs to the TRAFAC class translation factor GTPase superfamily. Classic translation factor GTPase family. LepA subfamily.

Its subcellular location is the cell inner membrane. The enzyme catalyses GTP + H2O = GDP + phosphate + H(+). Its function is as follows. Required for accurate and efficient protein synthesis under certain stress conditions. May act as a fidelity factor of the translation reaction, by catalyzing a one-codon backward translocation of tRNAs on improperly translocated ribosomes. Back-translocation proceeds from a post-translocation (POST) complex to a pre-translocation (PRE) complex, thus giving elongation factor G a second chance to translocate the tRNAs correctly. Binds to ribosomes in a GTP-dependent manner. The polypeptide is Elongation factor 4 (Oleidesulfovibrio alaskensis (strain ATCC BAA-1058 / DSM 17464 / G20) (Desulfovibrio alaskensis)).